A 278-amino-acid polypeptide reads, in one-letter code: MALKSFNPTTPSQRQLVIVSRAGLYKGKPVKTLTEGLSSKGGRNNLGRITVRFQGGGHKRTYRLVDFKRRKFDVEGTVERLEYDPNRTAFIALVNYADGEQAYILAPQRLAVGDKVIASEKAVDVKPGNAMPLQFIPVGSIIHNVEMKPGKGGQIARSAGTYAQLVGRDQGMAILRLNSGEQRLVHGSCLASIGAVSNPDHGNINDGKAGRSRWRGKRPHVRGVVMNPVDHPHGGGEGRTSGGRHPVTPWGKPTKGKRTRSNKSTDKFIMRSRHQRKK.

The segment at 201–278 (HGNINDGKAG…IMRSRHQRKK (78 aa)) is disordered. Positions 210-221 (GRSRWRGKRPHV) are enriched in basic residues.

The protein belongs to the universal ribosomal protein uL2 family. As to quaternary structure, part of the 50S ribosomal subunit. Forms a bridge to the 30S subunit in the 70S ribosome.

Functionally, one of the primary rRNA binding proteins. Required for association of the 30S and 50S subunits to form the 70S ribosome, for tRNA binding and peptide bond formation. It has been suggested to have peptidyltransferase activity; this is somewhat controversial. Makes several contacts with the 16S rRNA in the 70S ribosome. The sequence is that of Large ribosomal subunit protein uL2 from Rhizobium meliloti (strain 1021) (Ensifer meliloti).